An 896-amino-acid chain; its full sequence is Protein translocase subunit SecA (896 aa).

ATP is bound by residues Gln87, 105–109 (GEGKT), and Asp507. Positions 853–879 (ESLSENDEASETQTFRRQEKKIGRNDP) are disordered. Basic and acidic residues predominate over residues 866-876 (TFRRQEKKIGR). 4 residues coordinate Zn(2+): Cys880, Cys882, Cys891, and His892.

This sequence belongs to the SecA family. As to quaternary structure, monomer and homodimer. Part of the essential Sec protein translocation apparatus which comprises SecA, SecYEG and auxiliary proteins SecDF-YajC and YidC. Zn(2+) is required as a cofactor.

Its subcellular location is the cell inner membrane. It is found in the cytoplasm. It carries out the reaction ATP + H2O + cellular proteinSide 1 = ADP + phosphate + cellular proteinSide 2.. Its function is as follows. Part of the Sec protein translocase complex. Interacts with the SecYEG preprotein conducting channel. Has a central role in coupling the hydrolysis of ATP to the transfer of proteins into and across the cell membrane, serving both as a receptor for the preprotein-SecB complex and as an ATP-driven molecular motor driving the stepwise translocation of polypeptide chains across the membrane. This is Protein translocase subunit SecA from Legionella pneumophila (strain Corby).